Consider the following 478-residue polypeptide: PRAME family member 15 (478 aa).

Residues 99–126 (RWKLQVLDLQDVCENFWMVWSEAMAHGC) form an LRR 1; degenerate repeat. An LRR 2; degenerate repeat occupies 181–205 (HLCCKKLKILGMPFRNIRSILKMVN). An LRR 3; degenerate repeat occupies 206–232 (LDCIQEVEVNCKWVLPILTQFTPYLGH). An LRR 4; degenerate repeat occupies 233–268 (MRNLQKLVLSHMDVSRYVSPEQKKEIVTQFTTQFLK). LRR repeat units follow at residues 269 to 294 (LRCLQKLYMNSVSFLEGHLDQLLSCL), 295 to 326 (KTSLKVLTITNCVLLESDLKHLSQCPSISQLK), 327 to 347 (TLDLSGIRLTNYSLVPLQILL), 351 to 378 (AATLEYLDLDDCGIIDSQVNAILPALSR), and 379 to 403 (CFELNTFSFCGNPICMATLENLLSH).

Belongs to the PRAME family.

In Homo sapiens (Human), this protein is PRAME family member 15.